Consider the following 198-residue polypeptide: DnaJ homolog subfamily C member 12 (198 aa).

N-acetylmethionine is present on Met-1. In terms of domain architecture, J spans 14–79 (DYYALLGCDE…ESRARYDHWR (66 aa)). The disordered stretch occupies residues 114-177 (EGSGQTFTSS…GLSDLNCGHL (64 aa)). Polar residues predominate over residues 116–125 (SGQTFTSSVP). Basic and acidic residues predominate over residues 126-156 (NKERSEQRETKKGDPDSNPEKMKQKEPKFPE). Phosphoserine occurs at positions 160, 166, and 182.

In terms of assembly, interacts with HSPA8. Interacts with TPH1. Interacts with TPH2. As to expression, highest levels of expression are detected in kidney, pineal gland, and raphe nuclei in the brain where it localizes to serotonerigic neurons.

The protein resides in the cytoplasm. Its function is as follows. Probable co-chaperone that participates in the proper folding of biopterin-dependent aromatic amino acid hydroxylases, which include phenylalanine-4-hydroxylase (PAH), tyrosine 3-monooxygenase (TH) and peripheral and neuronal tryptophan hydroxylases (TPH1 and TPH2). The chain is DnaJ homolog subfamily C member 12 (Dnajc12) from Mus musculus (Mouse).